The sequence spans 205 residues: Methylthioribulose-1-phosphate dehydratase (205 aa).

The Zn(2+) site is built by histidine 98 and histidine 100.

The protein belongs to the aldolase class II family. MtnB subfamily. Requires Zn(2+) as cofactor.

The enzyme catalyses 5-(methylsulfanyl)-D-ribulose 1-phosphate = 5-methylsulfanyl-2,3-dioxopentyl phosphate + H2O. The protein operates within amino-acid biosynthesis; L-methionine biosynthesis via salvage pathway; L-methionine from S-methyl-5-thio-alpha-D-ribose 1-phosphate: step 2/6. Catalyzes the dehydration of methylthioribulose-1-phosphate (MTRu-1-P) into 2,3-diketo-5-methylthiopentyl-1-phosphate (DK-MTP-1-P). This Gluconacetobacter diazotrophicus (strain ATCC 49037 / DSM 5601 / CCUG 37298 / CIP 103539 / LMG 7603 / PAl5) protein is Methylthioribulose-1-phosphate dehydratase.